The chain runs to 303 residues: Monoglyceride lipase (303 aa).

Residue Thr10 is modified to Phosphothreonine. Tyr58 is subject to 3'-nitrotyrosine. Ser122 acts as the Nucleophile in catalysis. Ser189 carries the post-translational modification Phosphoserine. Catalysis depends on charge relay system residues Asp239 and His269.

This sequence belongs to the AB hydrolase superfamily. Monoacylglycerol lipase family. As to quaternary structure, homodimer. As to expression, ubiquitous. Highly expressed in adipose tissue, adrenal gland, ovary, heart, spleen, lung, skeletal muscle, kidney and testis. Highly expressed throughout the brain.

The protein resides in the cytoplasm. It is found in the cytosol. It localises to the membrane. The enzyme catalyses Hydrolyzes glycerol monoesters of long-chain fatty acids.. It catalyses the reaction a 1-acylglycerol + H2O = glycerol + a fatty acid + H(+). It carries out the reaction a 2-acylglycerol + H2O = glycerol + a fatty acid + H(+). The catalysed reaction is 1-octanoylglycerol + H2O = octanoate + glycerol + H(+). The enzyme catalyses 2-(5Z,8Z,11Z,14Z-eicosatetraenoyl)-glycerol + H2O = glycerol + (5Z,8Z,11Z,14Z)-eicosatetraenoate + H(+). It catalyses the reaction 1-decanoylglycerol + H2O = decanoate + glycerol + H(+). It carries out the reaction 1-dodecanoylglycerol + H2O = dodecanoate + glycerol + H(+). The catalysed reaction is 1-tetradecanoylglycerol + H2O = tetradecanoate + glycerol + H(+). The enzyme catalyses 2-hexadecanoylglycerol + H2O = glycerol + hexadecanoate + H(+). It catalyses the reaction 1-(9Z-octadecenoyl)-glycerol + H2O = glycerol + (9Z)-octadecenoate + H(+). It carries out the reaction 2-(9Z-octadecenoyl)-glycerol + H2O = glycerol + (9Z)-octadecenoate + H(+). The catalysed reaction is 2-(9Z,12Z-octadecadienoyl)-glycerol + H2O = (9Z,12Z)-octadecadienoate + glycerol + H(+). The enzyme catalyses 1-(5Z,8Z,11Z,14Z-eicosatetraenoyl)-glycerol + H2O = glycerol + (5Z,8Z,11Z,14Z)-eicosatetraenoate + H(+). It catalyses the reaction 1-(9Z,12Z-octadecadienoyl)-glycerol + H2O = (9Z,12Z)-octadecadienoate + glycerol + H(+). It carries out the reaction 1-hexadecanoylglycerol + H2O = glycerol + hexadecanoate + H(+). The catalysed reaction is 1-octadecanoylglycerol + H2O = octadecanoate + glycerol + H(+). The enzyme catalyses prostaglandin E2 1-glyceryl ester + H2O = prostaglandin E2 + glycerol + H(+). It catalyses the reaction prostaglandin D2-1-glycerol ester + H2O = prostaglandin D2 + glycerol + H(+). It carries out the reaction 2-glyceryl-15-deoxy-Delta(12,14)-prostaglandin J2 + H2O = 15-deoxy-Delta(12,14)-prostaglandin J2 + glycerol + H(+). The catalysed reaction is prostaglandin F2alpha 1-glyceryl ester + H2O = prostaglandin F2alpha + glycerol + H(+). The protein operates within glycerolipid metabolism; triacylglycerol degradation. In terms of biological role, converts monoacylglycerides to free fatty acids and glycerol. Hydrolyzes the endocannabinoid 2-arachidonoylglycerol, and thereby contributes to the regulation of endocannabinoid signaling, nociperception and perception of pain. Regulates the levels of fatty acids that serve as signaling molecules and promote cancer cell migration, invasion and tumor growth. In Rattus norvegicus (Rat), this protein is Monoglyceride lipase.